Here is a 537-residue protein sequence, read N- to C-terminus: Probable quinate permease (537 aa).

Over 1–22 (MSILSLVEDRPTPKEVYNWKIY) the chain is Cytoplasmic. The helical transmembrane segment at 23 to 43 (LLAAVASCTSCMIGYDSAFIG) threads the bilayer. At 44–74 (TTISLQSFKDEFDWDSMSAAHQDLVSSNIVS) the chain is on the extracellular side. Residues 75–95 (LYQAGAFFGAFFAYPIGHFWG) traverse the membrane as a helical segment. Residues 96–97 (RK) lie on the Cytoplasmic side of the membrane. Residues 98 to 118 (WGLMVSALIFTLGAGIMLGTN) form a helical membrane-spanning segment. Residues 119–130 (GDRGFGLLYGGR) lie on the Extracellular side of the membrane. Residues 131–151 (VLAGLGVGAGSNITPIYISEL) form a helical membrane-spanning segment. Over 152–159 (SPPAIRGR) the chain is Cytoplasmic. A helical membrane pass occupies residues 160–180 (LVGVYELGWQIGGLVGFWICY). Residues 181 to 193 (GVDETLPPSHKQW) are Extracellular-facing. Residues 194 to 214 (IIPFAVQLIPSGLLIIGALFL) form a helical membrane-spanning segment. The Cytoplasmic segment spans residues 215-285 (KESPRWLFLR…AWTNKKILYR (71 aa)). A helical membrane pass occupies residues 286–306 (LFLGSMLFFWQNGSGINAINY). Over 307–325 (YSPTVFKSIGVTGSNTSLF) the chain is Extracellular. The chain crosses the membrane as a helical span at residues 326–346 (TTGIFGVVKTVVTFIWLLWLI). Residues 347–352 (DRVGRR) are Cytoplasmic-facing. Residues 353 to 373 (LLLLIGAAGGSICLWIVGAYI) form a helical membrane-spanning segment. Residues 374-387 (KIARPSERENKQMD) lie on the Extracellular side of the membrane. A helical transmembrane segment spans residues 388–408 (GGGIAAMFFFYLWTVFYTPSW). Residues 409–456 (NGTPWVINSEMFDPNIRSLAQACAAGSNWLWNFLISRFTPQMFAKMDY) are Cytoplasmic-facing. The helical transmembrane segment at 457–477 (GVYFFFASLMILSIIFVFFLI) threads the bilayer. Over 478–537 (PETKGIPLESMDRLFETQPIWRAHGTLLKQIREDEERFRHDLEDSGFVKSTDRQVEVVDA) the chain is Extracellular.

The protein belongs to the major facilitator superfamily. Sugar transporter (TC 2.A.1.1) family. In terms of assembly, interacts with creB. Ubiquitinated. Deubiquitinated by creB, probably to control its activity or amount.

The protein localises to the cell membrane. Integral membrane transporter that imports quinic acid to be catabolized as a carbon source. The protein is Probable quinate permease (qutD) of Aspergillus flavus (strain ATCC 200026 / FGSC A1120 / IAM 13836 / NRRL 3357 / JCM 12722 / SRRC 167).